Consider the following 452-residue polypeptide: MNKILIAAASSGAGKTTVTLGIMQALKKRGFAVQPFKVGPDYIDTNYHQAITGVASINLDSFLIDDDEMLASLFQKHGESADISVIEGVMGLFDGLGTDRDNASTSFIAKCTKTPVILVVDGKAISTSAAAIVDGFNRFDPELKIAGVIINRVASENHFSLIKGAIERYTDVPVLGYLPKNAAVALPERHLGLVPQEEMTELEAKWELLSDLITTHVDLDKLLEISKSSENLSTSKAQMKVADFSGLRVAYALDAAFHFYYQDNLDLIRLTGAELIPFSPLEDNEVPEADFIYIGGGFPEIFAKQLNDNRSMRKSILAAHEKGIPIYAECGGLMYLGSSLEMEGKQYEMVGVFNGISKMTTRLRKFGYCIAEPLEETLIGKKGMSIRGHEFHHSVFETTETACMKLSKKRDGEIVKEWRGGYQKGNTFASYLHIHFYQNPAILMQMFGAGKR.

Residues 248–441 (RVAYALDAAF…LHIHFYQNPA (194 aa)) form the GATase cobBQ-type domain. Residue Cys-330 is the Nucleophile of the active site.

Belongs to the CobB/CbiA family. It depends on Mg(2+) as a cofactor.

The enzyme catalyses cob(II)yrinate + 2 L-glutamine + 2 ATP + 2 H2O = cob(II)yrinate a,c diamide + 2 L-glutamate + 2 ADP + 2 phosphate + 2 H(+). The protein operates within cofactor biosynthesis; adenosylcobalamin biosynthesis; cob(II)yrinate a,c-diamide from sirohydrochlorin (anaerobic route): step 10/10. Its function is as follows. Catalyzes the ATP-dependent amidation of the two carboxylate groups at positions a and c of cobyrinate, using either L-glutamine or ammonia as the nitrogen source. In Listeria innocua serovar 6a (strain ATCC BAA-680 / CLIP 11262), this protein is Cobyrinate a,c-diamide synthase.